Reading from the N-terminus, the 324-residue chain is MTLSWFHKLVPSKIRTEASTKSTVPEGLWCKCPSCNAILYKSEVERNLEVCPKCSHHMRISARKRLHLFLDPGNRLEIGEGLAPLDPLKFKDSKKYKDRLQQAQKATGEKDALIVVAGQLLGLPVVAGAFNFEFMGGSMGSVVGERFVRGVNHSLEHGAPFVVFSASGGARMQESLLSLFQMAKTSAALGRLSKARIPFISVLTDPTMGGVSASFAMLGDINIAEPGALIGFAGPRVIEQTVREKLPEGFQRSEFLLEHGAVDMIVDRRDLRERIAALLALMTRDGRAVAPAAAKAPPAIGEGAGEADLARCLSALPMDDPEAE.

The 270-residue stretch at 28-297 (LWCKCPSCNA…AVAPAAAKAP (270 aa)) folds into the CoA carboxyltransferase N-terminal domain. Residues Cys-32, Cys-35, Cys-51, and Cys-54 each coordinate Zn(2+). The C4-type zinc finger occupies 32–54 (CPSCNAILYKSEVERNLEVCPKC).

It belongs to the AccD/PCCB family. In terms of assembly, acetyl-CoA carboxylase is a heterohexamer composed of biotin carboxyl carrier protein (AccB), biotin carboxylase (AccC) and two subunits each of ACCase subunit alpha (AccA) and ACCase subunit beta (AccD). Zn(2+) serves as cofactor.

It is found in the cytoplasm. The enzyme catalyses N(6)-carboxybiotinyl-L-lysyl-[protein] + acetyl-CoA = N(6)-biotinyl-L-lysyl-[protein] + malonyl-CoA. Its pathway is lipid metabolism; malonyl-CoA biosynthesis; malonyl-CoA from acetyl-CoA: step 1/1. Component of the acetyl coenzyme A carboxylase (ACC) complex. Biotin carboxylase (BC) catalyzes the carboxylation of biotin on its carrier protein (BCCP) and then the CO(2) group is transferred by the transcarboxylase to acetyl-CoA to form malonyl-CoA. The polypeptide is Acetyl-coenzyme A carboxylase carboxyl transferase subunit beta (Methylococcus capsulatus (strain ATCC 33009 / NCIMB 11132 / Bath)).